We begin with the raw amino-acid sequence, 77 residues long: Sec-independent protein translocase protein TatA (77 aa).

Residues 2–22 form a helical membrane-spanning segment; it reads GFGGISIWQLLIILLIVVMLF. 2 stretches are compositionally biased toward basic and acidic residues: residues 46–59 and 66–77; these read DNGE…EEPK and QARKVEEPAKKD. A disordered region spans residues 46–77; that stretch reads DNGEAEKPAVEEPKGQTIDAQARKVEEPAKKD.

It belongs to the TatA/E family. The Tat system comprises two distinct complexes: a TatABC complex, containing multiple copies of TatA, TatB and TatC subunits, and a separate TatA complex, containing only TatA subunits. Substrates initially bind to the TatABC complex, which probably triggers association of the separate TatA complex to form the active translocon.

The protein localises to the cell inner membrane. Part of the twin-arginine translocation (Tat) system that transports large folded proteins containing a characteristic twin-arginine motif in their signal peptide across membranes. TatA could form the protein-conducting channel of the Tat system. This Ectopseudomonas mendocina (strain ymp) (Pseudomonas mendocina) protein is Sec-independent protein translocase protein TatA.